The following is a 347-amino-acid chain: Extracellular exo-alpha-(1-&gt;5)-L-arabinofuranosidase ArbA (347 aa).

The signal sequence occupies residues 1 to 31 (MPTHHPITRQHWHHSWLSALALLCASLACGA). Asp35 is a substrate binding site. The active-site Proton acceptor is Asp38. Substrate is bound by residues 90–92 (DGH), 115–116 (GK), Asn155, Ser175, and Glu221. The Proton donor role is filled by Glu221. Ca(2+) is bound at residue His291. A substrate-binding site is contributed by Gln316.

Belongs to the glycosyl hydrolase 43 family. As to quaternary structure, homodimer.

Its subcellular location is the secreted. It catalyses the reaction Hydrolysis of terminal non-reducing alpha-L-arabinofuranoside residues in alpha-L-arabinosides.. It participates in glycan metabolism; L-arabinan degradation. In terms of biological role, involved in the degradation of arabinan and is a key enzyme in the complete degradation of the plant cell wall. Catalyzes the cleavage of the terminal alpha-(1-&gt;5)-arabinofuranosyl bonds of linear arabinan and carboxymethylarabinan to produce almost exclusively arabinotriose. The protein is Extracellular exo-alpha-(1-&gt;5)-L-arabinofuranosidase ArbA (arbA) of Cellvibrio japonicus (strain Ueda107) (Pseudomonas fluorescens subsp. cellulosa).